Here is a 379-residue protein sequence, read N- to C-terminus: Gap junction alpha-1 protein (379 aa).

Residues 2 to 23 are Cytoplasmic-facing; it reads GDWSALGRLLDKVQAYSTAGGK. A helical transmembrane segment spans residues 24–44; that stretch reads VWLSVLFIFRILLLGTAVESA. The Extracellular portion of the chain corresponds to 45-76; sequence WGDEQSAFVCNTQQPGCENVCYDKSFPISHVR. Cystine bridges form between C54–C192 and C187–C198. Residues 77–97 traverse the membrane as a helical segment; it reads FWVLQIIFVSTPTLLYLAHVF. Over 98–163 the chain is Cytoplasmic; it reads YLMRKEEKLN…TYIISILFKS (66 aa). The helical transmembrane segment at 164 to 184 threads the bilayer; that stretch reads VFEVGFIIIQWYMYGFSLSAI. The Extracellular portion of the chain corresponds to 185–207; that stretch reads YTCKRDPCPHQVDCFLSRPTEKT. The chain crosses the membrane as a helical span at residues 208 to 228; the sequence is IFIWFMLIVSIVSLALNIIEL. The Cytoplasmic portion of the chain corresponds to 229–379; the sequence is FYVTYKSIKD…SRPRPDDLEI (151 aa). The interval 322 to 379 is disordered; it reads STISNTHAQPFDFSDEHQNTKKMAPGHEMQPLTILDQRPSSRASSHASSRPRPDDLEI. Low complexity predominate over residues 359 to 371; that stretch reads RPSSRASSHASSR.

It belongs to the connexin family. Alpha-type (group II) subfamily. As to quaternary structure, a connexon is composed of a hexamer of connexins. Interacts with TMEM65. Expressed in most tissues. Highest levels found in eye and brain.

The protein localises to the cell membrane. The protein resides in the cell junction. It is found in the gap junction. In terms of biological role, one gap junction consists of a cluster of closely packed pairs of transmembrane channels, the connexons, through which materials of low MW diffuse from one cell to a neighboring cell. Plays an essential role in gap junction communication in the ventricles. The protein is Gap junction alpha-1 protein (gja1) of Xenopus laevis (African clawed frog).